The sequence spans 360 residues: SVP1-like protein 2 (360 aa).

WD repeat units follow at residues 12-50 (AHEP…LRMK), 191-231 (AHKS…LRFE), and 236-275 (LDRA…PQPE).

This sequence belongs to the WD repeat PROPPIN family.

Its subcellular location is the vacuole membrane. It is found in the cytoplasmic vesicle membrane. Its function is as follows. Involved in mitochondrial or peroxisomal functions and amino acid signaling pathways. This chain is SVP1-like protein 2 (HSV2), found in Pichia angusta (Yeast).